Reading from the N-terminus, the 506-residue chain is Light-independent protochlorophyllide reductase subunit B (506 aa).

Asp36 lines the [4Fe-4S] cluster pocket. Asp279 functions as the Proton donor in the catalytic mechanism. Position 414–415 (Gly414–Leu415) interacts with substrate.

The protein belongs to the ChlB/BchB/BchZ family. Protochlorophyllide reductase is composed of three subunits; BchL, BchN and BchB. Forms a heterotetramer of two BchB and two BchN subunits. [4Fe-4S] cluster is required as a cofactor.

The enzyme catalyses chlorophyllide a + oxidized 2[4Fe-4S]-[ferredoxin] + 2 ADP + 2 phosphate = protochlorophyllide a + reduced 2[4Fe-4S]-[ferredoxin] + 2 ATP + 2 H2O. It functions in the pathway porphyrin-containing compound metabolism; bacteriochlorophyll biosynthesis (light-independent). Functionally, component of the dark-operative protochlorophyllide reductase (DPOR) that uses Mg-ATP and reduced ferredoxin to reduce ring D of protochlorophyllide (Pchlide) to form chlorophyllide a (Chlide). This reaction is light-independent. The NB-protein (BchN-BchB) is the catalytic component of the complex. The protein is Light-independent protochlorophyllide reductase subunit B of Methylobacterium sp. (strain 4-46).